The chain runs to 100 residues: MIREERLLKVILAPHISEKSTVNAEKHNTVVFRVAIDATKAEIKAAVAKLFEVEVESVRTLVSKGKTKRTGGRVGRRSDWKKAYVTLAAGADIDFVGGAE.

This sequence belongs to the universal ribosomal protein uL23 family. Part of the 50S ribosomal subunit. Contacts protein L29, and trigger factor when it is bound to the ribosome.

Functionally, one of the early assembly proteins it binds 23S rRNA. One of the proteins that surrounds the polypeptide exit tunnel on the outside of the ribosome. Forms the main docking site for trigger factor binding to the ribosome. The protein is Large ribosomal subunit protein uL23 of Shewanella sp. (strain MR-4).